Consider the following 458-residue polypeptide: Bifunctional protein GlmU (458 aa).

A pyrophosphorylase region spans residues 1 to 230 (MHKRTAVVLA…EREILGINSR (230 aa)). Residues 9–12 (LAAG), K23, Q73, and 78–79 (GT) contribute to the UDP-N-acetyl-alpha-D-glucosamine site. Mg(2+) is bound at residue D103. The UDP-N-acetyl-alpha-D-glucosamine site is built by G140, E155, N170, and N228. Residue N228 participates in Mg(2+) binding. The segment at 231–251 (VQLAEAEAVLQDRLRRKWMDA) is linker. Positions 252–458 (GVTLIDPPSV…FLGRKHKGSQ (207 aa)) are N-acetyltransferase. Positions 333 and 351 each coordinate UDP-N-acetyl-alpha-D-glucosamine. H363 functions as the Proton acceptor in the catalytic mechanism. The UDP-N-acetyl-alpha-D-glucosamine site is built by Y366 and N377. Residues A380, 386–387 (NY), S405, A423, and R440 contribute to the acetyl-CoA site.

This sequence in the N-terminal section; belongs to the N-acetylglucosamine-1-phosphate uridyltransferase family. The protein in the C-terminal section; belongs to the transferase hexapeptide repeat family. Homotrimer. Requires Mg(2+) as cofactor.

Its subcellular location is the cytoplasm. It carries out the reaction alpha-D-glucosamine 1-phosphate + acetyl-CoA = N-acetyl-alpha-D-glucosamine 1-phosphate + CoA + H(+). The catalysed reaction is N-acetyl-alpha-D-glucosamine 1-phosphate + UTP + H(+) = UDP-N-acetyl-alpha-D-glucosamine + diphosphate. Its pathway is nucleotide-sugar biosynthesis; UDP-N-acetyl-alpha-D-glucosamine biosynthesis; N-acetyl-alpha-D-glucosamine 1-phosphate from alpha-D-glucosamine 6-phosphate (route II): step 2/2. It participates in nucleotide-sugar biosynthesis; UDP-N-acetyl-alpha-D-glucosamine biosynthesis; UDP-N-acetyl-alpha-D-glucosamine from N-acetyl-alpha-D-glucosamine 1-phosphate: step 1/1. The protein operates within bacterial outer membrane biogenesis; LPS lipid A biosynthesis. Catalyzes the last two sequential reactions in the de novo biosynthetic pathway for UDP-N-acetylglucosamine (UDP-GlcNAc). The C-terminal domain catalyzes the transfer of acetyl group from acetyl coenzyme A to glucosamine-1-phosphate (GlcN-1-P) to produce N-acetylglucosamine-1-phosphate (GlcNAc-1-P), which is converted into UDP-GlcNAc by the transfer of uridine 5-monophosphate (from uridine 5-triphosphate), a reaction catalyzed by the N-terminal domain. This Heliobacterium modesticaldum (strain ATCC 51547 / Ice1) protein is Bifunctional protein GlmU.